Here is a 522-residue protein sequence, read N- to C-terminus: Glutamate--cysteine ligase (522 aa).

Belongs to the glutamate--cysteine ligase type 1 family. Type 1 subfamily.

It carries out the reaction L-cysteine + L-glutamate + ATP = gamma-L-glutamyl-L-cysteine + ADP + phosphate + H(+). It participates in sulfur metabolism; glutathione biosynthesis; glutathione from L-cysteine and L-glutamate: step 1/2. This is Glutamate--cysteine ligase from Shewanella halifaxensis (strain HAW-EB4).